The sequence spans 309 residues: NAD-dependent protein deacylase sirtuin-5A, mitochondrial (309 aa).

The transit peptide at 1-35 directs the protein to the mitochondrion; sequence MILLTFHTRRLVSHAYCGLKPASQKKSIALEMTRP. The Deacetylase sirtuin-type domain occupies 36–306; the sequence is SSNLADFREA…PPALARHETE (271 aa). 57 to 76 provides a ligand contact to NAD(+); sequence GAGVSAESGVPTFRGAGGYW. Positions 101 and 104 each coordinate substrate. 139 to 142 provides a ligand contact to NAD(+); it reads QNID. The Proton acceptor role is filled by His157. 4 residues coordinate Zn(2+): Cys165, Cys168, Cys206, and Cys211. Residues 248 to 250, 274 to 276, and Cys292 contribute to the NAD(+) site; these read GTS and NME.

This sequence belongs to the sirtuin family. Class III subfamily. It depends on Zn(2+) as a cofactor.

The protein localises to the mitochondrion. The protein resides in the cytoplasm. It localises to the cytosol. It is found in the nucleus. It catalyses the reaction N(6)-malonyl-L-lysyl-[protein] + NAD(+) + H2O = 2''-O-malonyl-ADP-D-ribose + nicotinamide + L-lysyl-[protein]. The catalysed reaction is N(6)-succinyl-L-lysyl-[protein] + NAD(+) + H2O = 2''-O-succinyl-ADP-D-ribose + nicotinamide + L-lysyl-[protein]. The enzyme catalyses N(6)-glutaryl-L-lysyl-[protein] + NAD(+) + H2O = 2''-O-glutaryl-ADP-D-ribose + nicotinamide + L-lysyl-[protein]. NAD-dependent lysine demalonylase, desuccinylase and deglutarylase that specifically removes malonyl, succinyl and glutaryl groups on target proteins. Has weak NAD-dependent protein deacetylase activity; however this activity may not be physiologically relevant in vivo. The protein is NAD-dependent protein deacylase sirtuin-5A, mitochondrial (sirt5-a) of Xenopus laevis (African clawed frog).